An 81-amino-acid polypeptide reads, in one-letter code: Acyl carrier protein (81 aa).

In terms of domain architecture, Carrier spans 2 to 80 (ASEQEILSGL…DAVAYISQAQ (79 aa)). S40 carries the O-(pantetheine 4'-phosphoryl)serine modification.

Belongs to the acyl carrier protein (ACP) family. Post-translationally, 4'-phosphopantetheine is transferred from CoA to a specific serine of apo-ACP by AcpS. This modification is essential for activity because fatty acids are bound in thioester linkage to the sulfhydryl of the prosthetic group.

It is found in the cytoplasm. Its pathway is lipid metabolism; fatty acid biosynthesis. Carrier of the growing fatty acid chain in fatty acid biosynthesis. This chain is Acyl carrier protein, found in Kineococcus radiotolerans (strain ATCC BAA-149 / DSM 14245 / SRS30216).